A 91-amino-acid chain; its full sequence is MSDFNLVGVIRVMPTDPDVNLDELEEKLKKVIPEKYGLAKVEREPIAFGLVALKFYVLGRDEEGYSFDEVAEKFEEVENVESAEVETVSRI.

Belongs to the EF-1-beta/EF-1-delta family.

Its function is as follows. Promotes the exchange of GDP for GTP in EF-1-alpha/GDP, thus allowing the regeneration of EF-1-alpha/GTP that could then be used to form the ternary complex EF-1-alpha/GTP/AAtRNA. This Pyrococcus horikoshii (strain ATCC 700860 / DSM 12428 / JCM 9974 / NBRC 100139 / OT-3) protein is Elongation factor 1-beta (ef1b).